Reading from the N-terminus, the 110-residue chain is UPF0122 protein SERP0802 (110 aa).

This sequence belongs to the UPF0122 family.

In terms of biological role, might take part in the signal recognition particle (SRP) pathway. This is inferred from the conservation of its genetic proximity to ftsY/ffh. May be a regulatory protein. The chain is UPF0122 protein SERP0802 from Staphylococcus epidermidis (strain ATCC 35984 / DSM 28319 / BCRC 17069 / CCUG 31568 / BM 3577 / RP62A).